Reading from the N-terminus, the 360-residue chain is Biotin synthase 2 (360 aa).

Residues 53–280 (RRVKLNFLVN…TAEVRLSGGR (228 aa)) form the Radical SAM core domain. [4Fe-4S] cluster contacts are provided by cysteine 68, cysteine 72, and cysteine 75. [2Fe-2S] cluster contacts are provided by cysteine 112, cysteine 145, cysteine 205, and arginine 275.

This sequence belongs to the radical SAM superfamily. Biotin synthase family. As to quaternary structure, homodimer. It depends on [4Fe-4S] cluster as a cofactor. [2Fe-2S] cluster is required as a cofactor.

It carries out the reaction (4R,5S)-dethiobiotin + (sulfur carrier)-SH + 2 reduced [2Fe-2S]-[ferredoxin] + 2 S-adenosyl-L-methionine = (sulfur carrier)-H + biotin + 2 5'-deoxyadenosine + 2 L-methionine + 2 oxidized [2Fe-2S]-[ferredoxin]. It functions in the pathway cofactor biosynthesis; biotin biosynthesis; biotin from 7,8-diaminononanoate: step 2/2. Its function is as follows. Catalyzes the conversion of dethiobiotin (DTB) to biotin by the insertion of a sulfur atom into dethiobiotin via a radical-based mechanism. The polypeptide is Biotin synthase 2 (Frankia casuarinae (strain DSM 45818 / CECT 9043 / HFP020203 / CcI3)).